A 42-amino-acid chain; its full sequence is Photosystem II reaction center protein J (42 aa).

Residues 10–30 (IPLWLVLTIIGLAAIALLALF) traverse the membrane as a helical segment.

It belongs to the PsbJ family. As to quaternary structure, PSII is composed of 1 copy each of membrane proteins PsbA, PsbB, PsbC, PsbD, PsbE, PsbF, PsbH, PsbI, PsbJ, PsbK, PsbL, PsbM, PsbT, PsbY, PsbZ, Psb30/Ycf12, at least 3 peripheral proteins of the oxygen-evolving complex and a large number of cofactors. It forms dimeric complexes.

It localises to the plastid. The protein localises to the chloroplast thylakoid membrane. Functionally, this protein is a component of the reaction center of photosystem II. In terms of biological role, one of the components of the core complex of photosystem II (PSII). PSII is a light-driven water:plastoquinone oxidoreductase that uses light energy to abstract electrons from H(2)O, generating O(2) and a proton gradient subsequently used for ATP formation. It consists of a core antenna complex that captures photons, and an electron transfer chain that converts photonic excitation into a charge separation. This chain is Photosystem II reaction center protein J, found in Euglena gracilis.